The sequence spans 167 residues: Endoribonuclease YbeY (167 aa).

H131, H135, and H141 together coordinate Zn(2+).

It belongs to the endoribonuclease YbeY family. Zn(2+) serves as cofactor.

The protein localises to the cytoplasm. Its function is as follows. Single strand-specific metallo-endoribonuclease involved in late-stage 70S ribosome quality control and in maturation of the 3' terminus of the 16S rRNA. The polypeptide is Endoribonuclease YbeY (Rickettsia rickettsii (strain Iowa)).